The following is a 516-amino-acid chain: Cilia- and flagella-associated protein 53 (516 aa).

Coiled-coil stretches lie at residues 217–283 and 316–440; these read EEKK…LQVK and MQGY…RQMK. Basic and acidic residues-rich tracts occupy residues 417–436 and 461–472; these read KELLESATEEHKQLETDRNA and QAEREEEQREFE. Disordered regions lie at residues 417 to 443 and 455 to 475; these read KELLESATEEHKQLETDRNARQMKVAQ and YQQSQRQAEREEEQREFEAGL.

This sequence belongs to the CFAP53 family.

It is found in the cytoplasm. Its subcellular location is the cytoskeleton. The protein resides in the cilium axoneme. It localises to the microtubule organizing center. The protein localises to the centrosome. It is found in the centriolar satellite. Microtubule inner protein (MIP) part of the dynein-decorated doublet microtubules (DMTs) in cilia axoneme, which is required for motile cilia beating. Regulates motility patterns of both 9+0 and 9+2 motile cilia through differential localization and recruitment of axonemal dynein components. Required for motile cilium formation and movement. Involved in the establishment of left-right symmetry during embryogenesis. This chain is Cilia- and flagella-associated protein 53, found in Xenopus laevis (African clawed frog).